The sequence spans 372 residues: Hydrogenase-1 small chain (372 aa).

The segment at residues M1–A45 is a signal peptide (tat-type signal). The Periplasmic segment spans residues L46–T326. [4Fe-4S] cluster-binding residues include C62, C65, C160, C194, H232, C235, C260, and C266. 3 residues coordinate [3Fe-4S] cluster: C275, C294, and C297. Residues V327–A347 traverse the membrane as a helical segment. The tract at residues A347–A372 is disordered. Topologically, residues V348–A372 are cytoplasmic. Residues E360–A372 show a composition bias toward basic and acidic residues.

Belongs to the [NiFe]/[NiFeSe] hydrogenase small subunit family. As to quaternary structure, heterodimer of a large and a small subunit. [4Fe-4S] cluster serves as cofactor. [3Fe-4S] cluster is required as a cofactor. Predicted to be exported by the Tat system. The position of the signal peptide cleavage has not been experimentally proven.

It is found in the cell inner membrane. The enzyme catalyses H2 + A = AH2. Its function is as follows. This is one of three E.coli hydrogenases synthesized in response to different physiological conditions. HYD1 is believed to have a role in hydrogen cycling during fermentative growth. The protein is Hydrogenase-1 small chain (hyaA) of Escherichia coli O6:H1 (strain CFT073 / ATCC 700928 / UPEC).